The chain runs to 358 residues: Branched-chain amino acid aminotransferase gloG (358 aa).

Arg91 lines the pyridoxal 5'-phosphate pocket. Residue Lys195 is the Proton acceptor of the active site. Lys195 carries the post-translational modification N6-(pyridoxal phosphate)lysine. Pyridoxal 5'-phosphate is bound at residue Glu231.

Belongs to the class-IV pyridoxal-phosphate-dependent aminotransferase family. The cofactor is pyridoxal 5'-phosphate.

It catalyses the reaction L-isoleucine + 2-oxoglutarate = (S)-3-methyl-2-oxopentanoate + L-glutamate. The catalysed reaction is L-leucine + 2-oxoglutarate = 4-methyl-2-oxopentanoate + L-glutamate. The enzyme catalyses L-valine + 2-oxoglutarate = 3-methyl-2-oxobutanoate + L-glutamate. It functions in the pathway mycotoxin biosynthesis. Its function is as follows. Branched-chain amino acid aminotransferase; part of the gene cluster that mediates the biosynthesis of pneumocandins, lipohexapeptides of the echinocandin family that prevent fungal cell wall formation by non-competitive inhibition of beta-1,3-glucan synthase. The 10,12-dimethylmyristoyl side chain is synthesized by the reducing polyketide synthase gloL/GLPKS4. The thioesterase gloN/GLHYD exclusively interacts with gloL/GLPKS4 to maintain turnover of the polyketide side chain. The 10R,12S-dimethylmyristic acid is then transferred to the first thiolation domain of the nonribosomal peptide synthetase gloA/GLNRPS4 by the acyl-AMP ligase gloD/GLligase, followed by its acylation to L-ornithine to trigger elongation of the cyclic hexapeptide. L-ornithine, 4R-hydroxyl-L-proline (generated from L-proline by the dioxygenase gloF/GLOXY2), 3S-hydroxyl-L-homotyrosine (generated by gloG/GLHtyB, gloH/GLHtyA, gloI/GLHtyC, gloJ/GLHtyD and hydroxylated at C-3 by the dioxygenase gloM/GLOXY1), 3R-hydroxyl-L-glutamine (generated from L-glutamine probably by the dioxygenase gloE/GLOXY3) and 3S-hydroxyl-L-proline (generated from L-proline by the dioxygenase gloF/GLOXY2 to yield pneumocandin B0), or 3S-hydroxyl-4S-methyl-L-proline (generated from L-leucine by the dioxygenase gloC/GLOXY4 to yield pneumocandin A0) are sequentially added to the growing chain. The last C domain of gloA/GLNRPS4 is proposed to be responsible for cyclization by condensation to form the peptide bond between L-ornithine and 3S-hydroxyl-4S-methyl-L-proline (for pneumocandin A0) or 3S-hydroxyl-L-proline (for pneumocandin B0). Finally, the subsequent C-4 hydroxylation of 3S-hydroxyl-L-homotyrosine and L-ornithine dihydroxylation at C-4 and C-5 are performed by the cytochrome P450 monooxygenases gloP/GLP450-1 and gloO/GLP450-2, respectively. This is Branched-chain amino acid aminotransferase gloG from Glarea lozoyensis (strain ATCC 20868 / MF5171).